A 307-amino-acid polypeptide reads, in one-letter code: Ventral anterior homeobox 2 (307 aa).

3 disordered regions span residues 1–70 (MFDQ…DKLL), 155–175 (RTKQKKDQTKDTDKRSSSTSE), and 197–254 (PPPN…PSPR). The span at 25 to 38 (CRDRGRESKSRTEV) shows a compositional bias: basic and acidic residues. The span at 46–62 (SSTDTPGTSASTPTSSS) shows a compositional bias: low complexity. The segment at residues 103–162 (PKRTRTSFTAEQLYRLELEFQRCQYVVGRERTELARQLNLSETQVKVWFQNRRTKQKKDQ) is a DNA-binding region (homeobox). The span at 159-170 (KKDQTKDTDKRS) shows a compositional bias: basic and acidic residues. The segment covering 202-249 (LLAHPHPGNGSLLGSPSVSTSSGVSSSTTPPGAGSGTFGLSLSSLSGT) has biased composition (low complexity).

It belongs to the EMX homeobox family. Expressed in the anterior neural keel and later in the preoptic area, optic stalk and ventral retina.

It localises to the nucleus. Functionally, transcription factor that may function in dorsoventral specification of the forebrain. Required for closure of the choroid fissure and together with vax1 is required for optic nerve differentiation and to limit retinal development to the optic cup. In Danio rerio (Zebrafish), this protein is Ventral anterior homeobox 2 (vax2).